A 162-amino-acid chain; its full sequence is Tripartite terminase subunit 2 (162 aa).

The segment at M1–R58 is disordered. Over residues G43–A52 the composition is skewed to polar residues.

This sequence belongs to the herpesviridae TRM2 protein family. In terms of assembly, associates with TRM1 and TRM3 to form the tripartite terminase complex.

The protein resides in the host nucleus. Functionally, component of the molecular motor that translocates viral genomic DNA in empty capsid during DNA packaging. Forms a tripartite terminase complex together with TRM1 and TRM3 in the host cytoplasm. Once the complex reaches the host nucleus, it interacts with the capsid portal vertex. This portal forms a ring in which genomic DNA is translocated into the capsid. This Equine herpesvirus 1 (strain Ab4p) (EHV-1) protein is Tripartite terminase subunit 2.